A 425-amino-acid polypeptide reads, in one-letter code: Serine--tRNA ligase (425 aa).

228 to 230 (TSE) lines the L-serine pocket. 259 to 261 (RSE) serves as a coordination point for ATP. An L-serine-binding site is contributed by Glu282. An ATP-binding site is contributed by 346-349 (EISS). L-serine is bound at residue Ser384.

This sequence belongs to the class-II aminoacyl-tRNA synthetase family. Type-1 seryl-tRNA synthetase subfamily. Homodimer. The tRNA molecule binds across the dimer.

It localises to the cytoplasm. It catalyses the reaction tRNA(Ser) + L-serine + ATP = L-seryl-tRNA(Ser) + AMP + diphosphate + H(+). It carries out the reaction tRNA(Sec) + L-serine + ATP = L-seryl-tRNA(Sec) + AMP + diphosphate + H(+). It functions in the pathway aminoacyl-tRNA biosynthesis; selenocysteinyl-tRNA(Sec) biosynthesis; L-seryl-tRNA(Sec) from L-serine and tRNA(Sec): step 1/1. In terms of biological role, catalyzes the attachment of serine to tRNA(Ser). Is also able to aminoacylate tRNA(Sec) with serine, to form the misacylated tRNA L-seryl-tRNA(Sec), which will be further converted into selenocysteinyl-tRNA(Sec). This chain is Serine--tRNA ligase, found in Ehrlichia ruminantium (strain Gardel).